The primary structure comprises 209 residues: Ion-translocating oxidoreductase complex subunit G (209 aa).

The chain crosses the membrane as a helical span at residues Ala9 to Leu29. Thr175 is modified (FMN phosphoryl threonine).

This sequence belongs to the RnfG family. As to quaternary structure, the complex is composed of six subunits: RnfA, RnfB, RnfC, RnfD, RnfE and RnfG. FMN serves as cofactor.

It localises to the cell inner membrane. Functionally, part of a membrane-bound complex that couples electron transfer with translocation of ions across the membrane. In Pectobacterium atrosepticum (strain SCRI 1043 / ATCC BAA-672) (Erwinia carotovora subsp. atroseptica), this protein is Ion-translocating oxidoreductase complex subunit G.